We begin with the raw amino-acid sequence, 81 residues long: MRKILKIVSLLILLLLLVYSFFSPNSQLFVFVQLIIIAFLIGFGINCFVKKERYQGTLYFVIAICNITINLDKINELIQSI.

Positions 1–24 (MRKILKIVSLLILLLLLVYSFFSP) are cleaved as a signal peptide. The Extracellular segment spans residues 25–28 (NSQL). The helical transmembrane segment at 29–49 (FVFVQLIIIAFLIGFGINCFV) threads the bilayer. Over 50–81 (KKERYQGTLYFVIAICNITINLDKINELIQSI) the chain is Cytoplasmic.

It localises to the cell membrane. This is an uncharacterized protein from Bacillus subtilis (strain 168).